The chain runs to 65 residues: Crotamine (65 aa).

An N-terminal signal peptide occupies residues 1–22 (MKILYLLFAFLFLAFLSEPGNA). Short sequence motifs (nuclear localization signal) lie at residues 24-40 (KQCHKKGGHCFPKEKIC) and 49-61 (KMDCRWRWKCCKK). Disulfide bonds link Cys-26–Cys-58, Cys-33–Cys-52, and Cys-40–Cys-59.

The protein belongs to the crotamine-myotoxin family. As to quaternary structure, monomer. In terms of tissue distribution, expressed by the venom gland.

It is found in the secreted. Functionally, cationic peptide that possesses multiple functions. It acts as a cell-penetrating peptide (CPP), and as a potent voltage-gated potassium channel inhibitor. It exhibits antimicrobial activities, hind limb paralysis, and severe muscle necrosis by a non-enzymatic mechanism. As a cell-penetrating peptide, crotamine has high specificity for actively proliferating cells, and interacts inside the cell with subcellular and subnuclear structures, like vesicular compartments, chromosomes and centrioles. It penetrates into the cells as fast as five minutes after its addition to cell culture medium. In vivo, after intraperitoneal administration, it is found in cells of peritoneal fluid and bone marrow, demonstrating preferential nuclear and perinuclear localization. To enter the cell, it interacts with the chains of heparan sulfate membrane proteoglycan (HSPG), and is endocytosed (in complex with HSPG) in vesicles which are transported into the cell with the help of clathrin. Inside the cell, crotamine accumulates in lysosomal vesicles. As soon as the peptide accumulates in endosomes/lysosomes vesicles, these compartments are disrupted and their contents released into the cytosol. This loss of lysosomal content induces cell death at high concentrations, or promotes the distribution of crotamine in cytoplasmic compartments, which is a step before crotamine nuclear uptake. As a potassium channel inhibitor, this toxin selectively inhibits Kv1.1/KCNA1, Kv1.2/KCNA2 and Kv1.3/KCNA3 channels with an IC(50) of 369, 386 and 287 nM, respectively. The inhibition of Kv1.3/KCNA channels induced by this toxin occurs rapidly and is voltage-independent. The channel inhibition is reversible after washing, suggesting a pure and classical channel blockage effect, without effects in potassium channel kinetics. As an antimicrobial peptide, crotamine shows antibacterial activity against E.coli and B.subtilis, and antifungal activity against Candida spp., Trichosporon spp. and C.neoformans. It kills bacteria through membrane permeabilization. The protein is Crotamine (CRO2) of Crotalus durissus terrificus (South American rattlesnake).